A 132-amino-acid chain; its full sequence is CLAVATA3/ESR (CLE)-related protein TDIF (132 aa).

The first 26 residues, Met-1–Ala-26, serve as a signal peptide directing secretion. Residues Ser-42–Gln-62 form a helical membrane-spanning segment. Positions Glu-68–Pro-77 are enriched in polar residues. Residues Glu-68–Arg-132 form a disordered region. The segment covering Ser-87–Thr-96 has biased composition (low complexity). Residues Lys-101–Pro-111 show a composition bias toward basic residues. Residues Pro-123 and Pro-126 each carry the hydroxyproline modification. O-linked (Ara...) hydroxyproline glycosylation occurs at Pro-126.

This sequence belongs to the CLV3/ESR signal peptide family. Interacts specifically with the leucine-rich repeat receptor-like protein kinase TDR. Post-translationally, the TDIFp peptide contains two hydroxprolines, but hydroxylation had no direct effect on TDIFp activity. In terms of processing, the O-glycosylation (arabinosylation) of the hydroxyproline Pro-126 enhances binding affinity of the TDIFp peptide for its receptor.

Its subcellular location is the secreted. The protein resides in the extracellular space. It localises to the cell membrane. Functionally, extracellular signal peptide that regulates cell fate. Represses tracheary element differentiation but promotes the formation of procambial cells adjacent to phloem cells in the veins. This is CLAVATA3/ESR (CLE)-related protein TDIF from Zinnia elegans (Garden zinnia).